The sequence spans 251 residues: Triosephosphate isomerase (251 aa).

9–11 (NWK) provides a ligand contact to substrate. His94 (electrophile) is an active-site residue. Glu166 serves as the catalytic Proton acceptor. Substrate is bound by residues Gly172, Ser211, and 232–233 (GG).

This sequence belongs to the triosephosphate isomerase family. As to quaternary structure, homodimer.

Its subcellular location is the cytoplasm. It catalyses the reaction D-glyceraldehyde 3-phosphate = dihydroxyacetone phosphate. Its pathway is carbohydrate biosynthesis; gluconeogenesis. It participates in carbohydrate degradation; glycolysis; D-glyceraldehyde 3-phosphate from glycerone phosphate: step 1/1. Functionally, involved in the gluconeogenesis. Catalyzes stereospecifically the conversion of dihydroxyacetone phosphate (DHAP) to D-glyceraldehyde-3-phosphate (G3P). This is Triosephosphate isomerase from Xanthomonas axonopodis pv. citri (strain 306).